Here is a 113-residue protein sequence, read N- to C-terminus: Ribulose bisphosphate carboxylase small subunit (113 aa).

Belongs to the RuBisCO small chain family. In terms of assembly, heterohexadecamer of 8 large and 8 small subunits. Forms a CsoS2-CsoS1-RuBisCO complex.

It is found in the carboxysome. Functionally, ruBisCO catalyzes two reactions: the carboxylation of D-ribulose 1,5-bisphosphate, the primary event in carbon dioxide fixation, as well as the oxidative fragmentation of the pentose substrate in the photorespiration process. Both reactions occur simultaneously and in competition at the same active site. Although the small subunit is not catalytic it is essential for maximal activity. There are estimated to be 152 RuBisCO holoenzymes per carboxysome. The sequence is that of Ribulose bisphosphate carboxylase small subunit from Prochlorococcus marinus subsp. pastoris (strain CCMP1986 / NIES-2087 / MED4).